The following is a 902-amino-acid chain: Androgen receptor (902 aa).

The segment at 1 to 540 (MEVQLGLGRV…PIDYYFPPQK (540 aa)) is modulating. An interaction with ZNF318 region spans residues 1-569 (MEVQLGLGRV…GSCKVFFKRA (569 aa)). Disordered stretches follow at residues 35 to 146 (QNPG…LSLL) and 194 to 224 (QQEV…YLGG). Ser-61 carries the post-translational modification Phosphoserine; by CDK9. Ser-75 is subject to Phosphoserine. Positions 94–103 (QPSQQQSASE) are enriched in low complexity. 2 stretches are compositionally biased toward polar residues: residues 196-205 (EVISEGSSSV) and 213-224 (APSSSKDSYLGG). At Tyr-221 the chain carries Phosphotyrosine; by CSK. Phosphoserine is present on Ser-254. Residue Tyr-265 is modified to Phosphotyrosine; by CSK and TNK2. At Ser-290 the chain carries Phosphoserine. 4 positions are modified to phosphotyrosine; by CSK: Tyr-305, Tyr-344, Tyr-355, and Tyr-360. Position 361 is a phosphotyrosine; by CSK and TNK2 (Tyr-361). Lys-384 participates in a covalent cross-link: Glycyl lysine isopeptide (Lys-Gly) (interchain with G-Cter in SUMO). Tyr-391 carries the post-translational modification Phosphotyrosine; by CSK. A disordered region spans residues 439-465 (EGQLYGPGGGGGSSSPSDAGPVAPYGY). Lys-503 participates in a covalent cross-link: Glycyl lysine isopeptide (Lys-Gly) (interchain with G-Cter in SUMO). 2 positions are modified to phosphotyrosine; by CSK: Tyr-517 and Tyr-534. The segment at 534-901 (YYFPPQKTCL…GKVKPIYFHT (368 aa)) is interaction with LPXN. Residues 541–614 (TCLICGDEAS…AGMTLGARKL (74 aa)) constitute a DNA-binding region (nuclear receptor). NR C4-type zinc fingers lie at residues 542–562 (CLIC…CGSC) and 578–602 (CASR…LRKC). The segment at 554 to 644 (YGALTCGSCK…TEDPSQKMTV (91 aa)) is interaction with HIPK3. The segment at 574–901 (QKYLCASRND…GKVKPIYFHT (328 aa)) is interaction with CCAR1. The tract at residues 607 to 901 (MTLGARKLKK…GKVKPIYFHT (295 aa)) is interaction with KAT7. Ser-633 carries the phosphoserine modification. The 232-residue stretch at 651-882 (ECQPIFLNVL…DFPEMMAEII (232 aa)) folds into the NR LBD domain. Residues Asn-688 and Arg-735 each coordinate 17beta-hydroxy-5alpha-androstan-3-one. Residues Lys-828 and Lys-830 each participate in a glycyl lysine isopeptide (Lys-Gly) (interchain with G-Cter in ubiquitin) cross-link. A 17beta-hydroxy-5alpha-androstan-3-one-binding site is contributed by Thr-860. The residue at position 898 (Tyr-898) is a Phosphotyrosine; by CSK.

Belongs to the nuclear hormone receptor family. NR3 subfamily. As to quaternary structure, binds DNA as a homodimer. Part of a ternary complex containing AR, EFCAB6/DJBP and PARK7. Interacts with HIPK3 and NR0B2 in the presence of androgen. The ligand binding domain interacts with KAT7/HBO1 in the presence of dihydrotestosterone. Interacts with EFCAB6/DJBP, PQBP1, RANBP9, RBAK, SPDEF, SRA1, TGFB1I1, ZNF318 and RREB1. Interacts with ZMIZ1/ZIMP10 and ZMIZ2/ZMIP7 which both enhance its transactivation activity. Interacts with SLC30A9 and RAD54L2/ARIP4. Interacts with MACROD1 (via macro domain). Interacts via the ligand-binding domain with LXXLL and FXXLF motifs from NCOA1, NCOA2, NCOA3 and MAGEA11. Interacts (via nuclear receptor DNA binding domain and nuclear receptor ligand binding domain) with NCOA4. The AR N-terminal poly-Gln region binds Ran resulting in enhancement of AR-mediated transactivation. Ran-binding decreases as the poly-Gln length increases. Interacts with HIP1 (via coiled coil domain). Interacts (via ligand-binding domain) with TRIM68. Interacts with TNK2. Interacts with USP26. Interacts with RNF6. Interacts (regulated by RNF6 probably through polyubiquitination) with RNF14; regulates AR transcriptional activity. Interacts with PRMT2 and TRIM24. Interacts with RACK1. Interacts with RANBP10; this interaction enhances dihydrotestosterone-induced AR transcriptional activity. Interacts with PRPF6 in a hormone-independent way; this interaction enhances dihydrotestosterone-induced AR transcriptional activity. Interacts with STK4/MST1. Interacts with ZIPK/DAPK3. Interacts with LPXN. Interacts with MAK. Part of a complex containing AR, MAK and NCOA3. Interacts with CRY1. Interacts with CCAR1 and GATA2. Interacts with BUD31. Interacts with ARID4A. Interacts with ARID4B. Interacts (via NR LBD domain) with ZBTB7A; the interaction is direct and androgen-dependent. Interacts with NCOR1. Interacts with NCOR2. Interacts with CRY2 in a ligand-dependent manner. Post-translationally, phosphorylated in prostate cancer cells in response to several growth factors including EGF. Phosphorylation is induced by c-Src kinase (CSK). Tyr-517 is one of the major phosphorylation sites and an increase in phosphorylation and Src kinase activity is associated with prostate cancer progression. Phosphorylation by TNK2 enhances the DNA-binding and transcriptional activity. Phosphorylation at Ser-61 by CDK9 regulates AR promoter selectivity and cell growth. Phosphorylation by PAK6 leads to AR-mediated transcription inhibition. In terms of processing, sumoylated on Lys-384 (major) and Lys-503. Ubiquitinated. Deubiquitinated by USP26. 'Lys-6' and 'Lys-27'-linked polyubiquitination by RNF6 modulates AR transcriptional activity and specificity. Palmitoylated by ZDHHC7 and ZDHHC21. Palmitoylation is required for plasma membrane targeting and for rapid intracellular signaling via ERK and AKT kinases and cAMP generation. In terms of tissue distribution, highest levels in the seminal vesicle, ventral prostate and coagulating gland with lower levels in the kidney and levator ani muscle.

It localises to the nucleus. Its subcellular location is the cytoplasm. Its function is as follows. Steroid hormone receptors are ligand-activated transcription factors that regulate eukaryotic gene expression and affect cellular proliferation and differentiation in target tissues. Transcription factor activity is modulated by bound coactivator and corepressor proteins like ZBTB7A that recruits NCOR1 and NCOR2 to the androgen response elements/ARE on target genes, negatively regulating androgen receptor signaling and androgen-induced cell proliferation. Transcription activation is also down-regulated by NR0B2. Activated, but not phosphorylated, by HIPK3 and ZIPK/DAPK3. The protein is Androgen receptor (Ar) of Rattus norvegicus (Rat).